A 209-amino-acid polypeptide reads, in one-letter code: Imidazole glycerol phosphate synthase subunit HisH (209 aa).

The region spanning 3–209 (KIAIIDYGMG…SILKNFGEMK (207 aa)) is the Glutamine amidotransferase type-1 domain. C81 serves as the catalytic Nucleophile. Residues H190 and E192 contribute to the active site.

As to quaternary structure, heterodimer of HisH and HisF.

The protein localises to the cytoplasm. The enzyme catalyses 5-[(5-phospho-1-deoxy-D-ribulos-1-ylimino)methylamino]-1-(5-phospho-beta-D-ribosyl)imidazole-4-carboxamide + L-glutamine = D-erythro-1-(imidazol-4-yl)glycerol 3-phosphate + 5-amino-1-(5-phospho-beta-D-ribosyl)imidazole-4-carboxamide + L-glutamate + H(+). The catalysed reaction is L-glutamine + H2O = L-glutamate + NH4(+). Its pathway is amino-acid biosynthesis; L-histidine biosynthesis; L-histidine from 5-phospho-alpha-D-ribose 1-diphosphate: step 5/9. Functionally, IGPS catalyzes the conversion of PRFAR and glutamine to IGP, AICAR and glutamate. The HisH subunit catalyzes the hydrolysis of glutamine to glutamate and ammonia as part of the synthesis of IGP and AICAR. The resulting ammonia molecule is channeled to the active site of HisF. This chain is Imidazole glycerol phosphate synthase subunit HisH, found in Geobacter sulfurreducens (strain ATCC 51573 / DSM 12127 / PCA).